Here is a 268-residue protein sequence, read N- to C-terminus: Phosphatidylglycerol--prolipoprotein diacylglyceryl transferase (268 aa).

4 helical membrane passes run 14-34 (LGPIKIHWYGLMYLLGIFAGW), 57-77 (LTFYVALGVILGGRIGYIIFY), 90-110 (FFLWDGGMSFHGGFIGVLIAF), and 117-137 (IGANFFDLGEFVAPVIPIGLG). Position 140 (Arg-140) interacts with a 1,2-diacyl-sn-glycero-3-phospho-(1'-sn-glycerol). 3 consecutive transmembrane segments (helical) span residues 174 to 194 (QLFEFFFEGVVLFSVLWLVTI), 200 to 220 (YLVLGLFMFLYGCARFICEFF), and 238 to 258 (GQILSIPMILLGAVILIAVFI).

It belongs to the Lgt family.

The protein resides in the cell inner membrane. It carries out the reaction L-cysteinyl-[prolipoprotein] + a 1,2-diacyl-sn-glycero-3-phospho-(1'-sn-glycerol) = an S-1,2-diacyl-sn-glyceryl-L-cysteinyl-[prolipoprotein] + sn-glycerol 1-phosphate + H(+). The protein operates within protein modification; lipoprotein biosynthesis (diacylglyceryl transfer). In terms of biological role, catalyzes the transfer of the diacylglyceryl group from phosphatidylglycerol to the sulfhydryl group of the N-terminal cysteine of a prolipoprotein, the first step in the formation of mature lipoproteins. This Francisella tularensis subsp. novicida (strain U112) protein is Phosphatidylglycerol--prolipoprotein diacylglyceryl transferase.